A 1021-amino-acid polypeptide reads, in one-letter code: Nonribosomal peptide synthetase asaC (1021 aa).

Positions Arg-17–Arg-418 are adenylation (A) domain. The Carrier domain maps to Lys-528–His-603. Ser-563 bears the O-(pantetheine 4'-phosphoryl)serine mark. A short-chain dehydrogenase/reductase (R) domain region spans residues Leu-646–Ala-888.

It belongs to the NRP synthetase family.

Its pathway is secondary metabolite biosynthesis. Its function is as follows. Nonribosomal peptide synthetase; part of the gene cluster that mediates the biosynthesis of aspergillic acid, a hydroxamic acid-containing pyrazinone with aliphatic side chains that originates from leucine (Leu) and isoleucine (Ile). Aspergillic acid has antibiotic properties and was shown to be lethal to mice. The first step in the pathway is the production of deoxyaspergillic acid via a condensation between the Ile amine and the Leu carboxylic acid, followed by a reductive release from the protein forming the dipeptide aldehyde NH(2)-Leu-Ile-CHO, which could undergo an intermolecular cyclization resulting in a dihydropyrazinone. As the NRPS asaC lacks a condensation domain, it is improbable that it is responsible for condensation of Leu and Ile. One possibility is that asaC acts on a previously condensed dipeptide and functions as a Leu-Ile reductase to yield deoxyaspergillic acid. After asaC forms deoxyaspergillic acid, the cytochrome P450 asaD oxidizes the pyrazinone to the hydroxamic acid-containing bioactive metabolite aspergillic acid. The hydroxylase/desaturase asaB can then convert aspergillic acid to hydroxyaspergillic acid. Both aspergillic acid and hydroxyaspergillic acid can form complexes with iron producing ferriaspergillin analogs. The polypeptide is Nonribosomal peptide synthetase asaC (Aspergillus flavus (strain ATCC 200026 / FGSC A1120 / IAM 13836 / NRRL 3357 / JCM 12722 / SRRC 167)).